A 406-amino-acid polypeptide reads, in one-letter code: Na(+)/H(+) antiporter NhaA (406 aa).

A run of 12 helical transmembrane segments spans residues 29-49 (FAGILLIIAFTLAIIVSNNIF), 75-95 (FIELVNDGLMTFFFLLIGLEM), 111-131 (ILPAVAALGGVVVPVLIYMFF), 141-161 (GWAIPIATDTAFVLGILSFFS), 170-190 (AFIIGFSLIDDAFALIILALF), 195-215 (INTPALLISSVIIFILFILNY), 220-240 (QLFYYIIVGLLLWISMVESGI), 242-262 (GTLCGAIIALFIPVNIKGEFN), 278-298 (YFILPLFVFMNSGILLEYFAF), 306-326 (ILALIYGIIFGLFVGKQLGIM), 349-369 (FYSIAILGGIGFTLSLFIGSI), and 382-402 (AAVIIGSLISALFGVAVLKYC).

The protein belongs to the NhaA Na(+)/H(+) (TC 2.A.33) antiporter family.

Its subcellular location is the cell inner membrane. It carries out the reaction Na(+)(in) + 2 H(+)(out) = Na(+)(out) + 2 H(+)(in). Functionally, na(+)/H(+) antiporter that extrudes sodium in exchange for external protons. The chain is Na(+)/H(+) antiporter NhaA from Rickettsia massiliae (strain Mtu5).